The chain runs to 360 residues: METVLVINPGSTSTKLALFANHDCLAEETLRHSVQELAPFENVVSQTSFRKQMIAEFLETHNIIQLAAVVGRGGLLKPIPGGTYLVDQQMLEDLRTERFNTHASNLGAILANEFAEKYHVPAFIVDPVVVDELQPLARISGLKGIQRRSVGHALNQKAVARKIAEDLGKTYEQSNFIVVHLGGGISLGAHQKGRMVDVVNGLDGEGPYTPERSGALPLVEFAQWILEQELTISQVKKLIAGNSGLKSYLGETDLRHIQAQIAAGDQTANYYLKGMCYQIAKSIGEMAVVLEGTIDAIILTGGAAYSQTVVQEISQKVTWIAPIKVYPGEMEMAALYEGVNRVLTGEEQALNYSEAKIEQE.

It belongs to the acetokinase family.

It localises to the cytoplasm. The enzyme catalyses butanoate + ATP = butanoyl phosphate + ADP. This Enterococcus faecalis (strain ATCC 700802 / V583) protein is Probable butyrate kinase.